The chain runs to 2179 residues: FRAS1-related extracellular matrix protein 1 (2179 aa).

Positions 1–21 are cleaved as a signal peptide; that stretch reads MNSLSWGAANAVLLLLLLAWA. A Cell attachment site motif is present at residues 199–201; that stretch reads RGD. 3 CSPG repeats span residues 296 to 390, 413 to 500, and 521 to 615; these read KAAF…LEVY, APRV…FRIF, and PPFL…FVLW. N-linked (GlcNAc...) asparagine glycosylation is present at Asn-335. N-linked (GlcNAc...) asparagine glycans are attached at residues Asn-560 and Asn-622. CSPG repeat units lie at residues 642-754, 776-867, and 887-982; these read KEAP…FSVS, QVPE…LEVT, and EPPV…LVVS. The N-linked (GlcNAc...) asparagine glycan is linked to Asn-1014. 6 CSPG repeats span residues 1024-1126, 1147-1254, 1275-1372, 1393-1485, 1506-1596, and 1628-1724; these read PPSI…VYVT, EAPD…IQLS, KPML…FYLW, GDIV…FIIS, LPVV…FMAT, and PRIT…FQIM. A glycan (N-linked (GlcNAc...) asparagine) is linked at Asn-1566. A Calx-beta domain is found at 1731–1830; the sequence is ATPQILELKW…DDEVFEVILN (100 aa). The Cell attachment site signature appears at 1907–1909; the sequence is RGD. The region spanning 2060 to 2174 is the C-type lectin domain; sequence HSGYCHILIT…CRRAKPHNYV (115 aa). Cys-2151 and Cys-2165 form a disulfide bridge.

This sequence belongs to the FRAS1 family. In terms of assembly, interacts with FREM2.

Its subcellular location is the secreted. It localises to the extracellular space. The protein localises to the extracellular matrix. It is found in the basement membrane. Extracellular matrix protein that plays a role in epidermal differentiation and is required for epidermal adhesion during embryonic development. The chain is FRAS1-related extracellular matrix protein 1 from Homo sapiens (Human).